Consider the following 185-residue polypeptide: MNSDLKSFDKIEQKIGGSRKISNYIIGGMLTIGGIGFLLASISSYTGRDLLPLGNPSTLLFIPQGIIMGAYGVIANLLNFYLWYLVYINFGSGSNYFDKSSKSIEIRRKGLFKDIEVKLNFDEIKSVKLDISEGFNPRRRIALVLKGRKKPLPLSGAGELKPLLQVEEEGARLAKFLDVNLEGLK.

2 consecutive transmembrane segments (helical) span residues tyrosine 24 to serine 44 and isoleucine 66 to valine 86.

It belongs to the Ycf4 family.

It localises to the cellular thylakoid membrane. In terms of biological role, seems to be required for the assembly of the photosystem I complex. The chain is Photosystem I assembly protein Ycf4 from Prochlorococcus marinus (strain MIT 9301).